We begin with the raw amino-acid sequence, 209 residues long: Ras-related protein Rab-2-A (209 aa).

13–21 (GDTGVGKSC) contributes to the GTP binding site. Residues 35–43 (HDLTIGVEF) carry the Effector region motif. Residues 61-65 (DTAGQ), 119-122 (NKCD), and 149-151 (SAK) each bind GTP. 2 S-geranylgeranyl cysteine lipidation sites follow: C207 and C208.

The protein belongs to the small GTPase superfamily. Rab family.

Its subcellular location is the endoplasmic reticulum membrane. The protein resides in the golgi apparatus membrane. Its function is as follows. Protein transport. Probably involved in vesicular traffic. This chain is Ras-related protein Rab-2-A (RAB2A), found in Zea mays (Maize).